Consider the following 268-residue polypeptide: Tryptophan synthase alpha chain (268 aa).

Residues Glu49 and Asp60 each act as proton acceptor in the active site.

Belongs to the TrpA family. In terms of assembly, tetramer of two alpha and two beta chains.

It carries out the reaction (1S,2R)-1-C-(indol-3-yl)glycerol 3-phosphate + L-serine = D-glyceraldehyde 3-phosphate + L-tryptophan + H2O. The protein operates within amino-acid biosynthesis; L-tryptophan biosynthesis; L-tryptophan from chorismate: step 5/5. Functionally, the alpha subunit is responsible for the aldol cleavage of indoleglycerol phosphate to indole and glyceraldehyde 3-phosphate. This is Tryptophan synthase alpha chain from Escherichia coli O127:H6 (strain E2348/69 / EPEC).